Here is a 412-residue protein sequence, read N- to C-terminus: Dihydrolipoyllysine-residue acetyltransferase component of pyruvate dehydrogenase complex (412 aa).

The Lipoyl-binding domain occupies 2–78; it reads PIKILMPVLS…PVNSLIAVLS (77 aa). Position 43 is an N6-lipoyllysine (Lys43). Residues 132 to 169 enclose the Peripheral subunit-binding (PSBD) domain; the sequence is FASPLAKRLAKMGNIRLESVKGSGPHGRIVKQDILSYT. The active site involves His385.

The protein belongs to the 2-oxoacid dehydrogenase family. In terms of assembly, forms a 24-polypeptide structural core with octahedral symmetry. (R)-lipoate is required as a cofactor.

It carries out the reaction N(6)-[(R)-dihydrolipoyl]-L-lysyl-[protein] + acetyl-CoA = N(6)-[(R)-S(8)-acetyldihydrolipoyl]-L-lysyl-[protein] + CoA. In terms of biological role, the pyruvate dehydrogenase complex catalyzes the overall conversion of pyruvate to acetyl-CoA and CO(2). It contains multiple copies of three enzymatic components: pyruvate dehydrogenase (E1), dihydrolipoamide acetyltransferase (E2) and lipoamide dehydrogenase (E3). This is Dihydrolipoyllysine-residue acetyltransferase component of pyruvate dehydrogenase complex (pdhC) from Rickettsia felis (strain ATCC VR-1525 / URRWXCal2) (Rickettsia azadi).